The following is a 618-amino-acid chain: uncharacterized protein (618 aa).

The zn(2)-C6 fungal-type DNA-binding region spans 18-47 (SCQRCRQRKIKCDRLHPCFQCVKSNSQCFY). Serine 598 carries the phosphoserine modification.

The protein localises to the nucleus. This is an uncharacterized protein from Schizosaccharomyces pombe (strain 972 / ATCC 24843) (Fission yeast).